Reading from the N-terminus, the 716-residue chain is MTDLGLKWSCEYCTYENWPSAIKCTMCRAQRHNAPIITEEPFKSSSSLDPSLCTTQGGSTLLICPDSSARPRVRIADELPETSSKWSCHMCTYLNWPRAIRCTQCLSQRQQGSQQHSPLSPSETPQTSGSRPSPVTSDPCEEYNDRNRLNMHAQRWPCSACTYENWPKSLRCVVCDHPKPSGSPETPQQDSEAESATSPSIVNEQERENVRTAGGGGGGSRGRLRKLSPPMCKGQAEVKIELASGAVGSDNEQEADFKKLKQIRNRMRRSDWLFLNACAGVVEGDLAAVEAYKSSGGDIARQLTADEVRILNRPSAFDAGFTLVHLAIRFQRQDMLAVLLTEVSQQTAKCIPALVCPELTEQIRREVAAALHRRKGEFPCYFFTDLVTFTLPADIEDLPPNVQEKLFDEVLDRDVQKELEEESPIINWSLELGTRLDSRLYALWNRTAGDCLLDSVLQATWGIYDKDSVLRKSLNDSLHDCSHWFYTRWKEWESWYSQSFGLHFSLREEQWQEDWAFILSLASQPGASLEQTHVFVLAHILRRPIIVYGVKYYKSFRGETLGYTRFQGVYLPLLWEQSFCWKSPIALGYTRGHFSALVAMENDGYDNRGAGANLNTDDDVTVTFLPLVDSERKLLHIHFLSAQEMGTEEQQERMLRQWMDCCVTEGGVLVAMQKSSRRRNHPLVTQMVEKWLDGYRQLAACPTLSDGEEEEEDEDE.

RanBP2-type zinc fingers lie at residues 3-33 (DLGLKWSCEYCTYENWPSAIKCTMCRAQRHN) and 82-111 (TSSKWSCHMCTYLNWPRAIRCTQCLSQRQQ). Zn(2+) is bound by residues Cys10, Cys13, Cys24, Cys27, Cys88, Cys91, Cys102, and Cys105. Residues 113-143 (SQQHSPLSPSETPQTSGSRPSPVTSDPCEEY) form a disordered region. A compositionally biased stretch (polar residues) spans 118–136 (PLSPSETPQTSGSRPSPVT). The segment at 152–181 (HAQRWPCSACTYENWPKSLRCVVCDHPKPS) adopts a RanBP2-type 3 zinc-finger fold. Residues Cys158, Cys161, Cys172, and Cys175 each coordinate Zn(2+). Residues 178-228 (PKPSGSPETPQQDSEAESATSPSIVNEQERENVRTAGGGGGGSRGRLRKLS) are disordered. Polar residues predominate over residues 183–203 (SPETPQQDSEAESATSPSIVN). ANK repeat units follow at residues 268–298 (RRSDWLFLNACAGVVEGDLAAVEAYKSSGGD) and 321–348 (FTLVHLAIRFQRQDMLAVLLTEVSQQTA). One can recognise an OTU domain in the interval 440–600 (LYALWNRTAG…RGHFSALVAM (161 aa)). The Nucleophile role is filled by Cys451. Residue His593 is the Proton acceptor of the active site.

Belongs to the peptidase C64 family.

Its subcellular location is the cytoplasm. It localises to the nucleus. The catalysed reaction is Thiol-dependent hydrolysis of ester, thioester, amide, peptide and isopeptide bonds formed by the C-terminal Gly of ubiquitin (a 76-residue protein attached to proteins as an intracellular targeting signal).. Ubiquitin thioesterase, which specifically hydrolyzes 'Lys-29'-linked and 'Lys-33'-linked diubiquitin. Also cleaves 'Lys-63'-linked chains, but with 40-fold less efficiency compared to 'Lys-29'-linked ones. Positive regulator of the Wnt signaling pathway that deubiquitinates apc protein, a negative regulator of Wnt-mediated transcription. Acts as a regulator of autophagy by mediating deubiquitination of pik3c3/vps34, thereby promoting autophagosome maturation. Plays a role in the regulation of cell morphology and cytoskeletal organization. Required in the stress fiber dynamics and cell migration. This chain is Ubiquitin thioesterase zranb1-B (zranb1b), found in Danio rerio (Zebrafish).